A 188-amino-acid chain; its full sequence is uncharacterized protein (188 aa).

An L5-specific motif motif is present at residues 62-77; the sequence is ITGEKPLIKLNESTEK.

The protein localises to the mitochondrion. This is an uncharacterized protein from Dictyostelium discoideum (Social amoeba).